We begin with the raw amino-acid sequence, 460 residues long: Fumarate hydratase class II (460 aa).

Substrate is bound by residues 95–97 (SGT), 126–129 (HPND), 136–138 (SSN), and Thr-184. The active-site Proton donor/acceptor is the His-185. Ser-315 is an active-site residue. Substrate-binding positions include Ser-316 and 321-323 (KIN).

Belongs to the class-II fumarase/aspartase family. Fumarase subfamily. Homotetramer.

Its subcellular location is the cytoplasm. It catalyses the reaction (S)-malate = fumarate + H2O. It functions in the pathway carbohydrate metabolism; tricarboxylic acid cycle; (S)-malate from fumarate: step 1/1. Involved in the TCA cycle. Catalyzes the stereospecific interconversion of fumarate to L-malate. This chain is Fumarate hydratase class II, found in Chlamydia caviae (strain ATCC VR-813 / DSM 19441 / 03DC25 / GPIC) (Chlamydophila caviae).